Here is a 255-residue protein sequence, read N- to C-terminus: MAAEIRLFTCLNDNFGYLIHDPATGATASVDAPEAAPIIAALAREGWTLTDILVTHHHGDHVGGVAELKQKYRCRVVAPHDRNGRIPEVDLRVAQGDVVKVGGLLARVLETPGHTLDHLAYVFDDDKAVFAGDTLFSIGCGRVFEGTYPMMWDSLLKLRVLPDDMRLYCGHEYTAANVKFALGVEPDNPALQARAAQVTALRAAGQPTIPTLLGEEKAANVFLRADEPSVAASVRLKGADPVAVFTELRERKNKS.

The Zn(2+) site is built by His-56, His-58, Asp-60, His-61, His-114, Asp-133, and His-171.

This sequence belongs to the metallo-beta-lactamase superfamily. Glyoxalase II family. In terms of assembly, monomer. Zn(2+) serves as cofactor.

It catalyses the reaction an S-(2-hydroxyacyl)glutathione + H2O = a 2-hydroxy carboxylate + glutathione + H(+). Its pathway is secondary metabolite metabolism; methylglyoxal degradation; (R)-lactate from methylglyoxal: step 2/2. In terms of biological role, thiolesterase that catalyzes the hydrolysis of S-D-lactoyl-glutathione to form glutathione and D-lactic acid. This Rhodopseudomonas palustris (strain BisA53) protein is Hydroxyacylglutathione hydrolase.